A 258-amino-acid chain; its full sequence is Ribosomal protein L11 methyltransferase (258 aa).

S-adenosyl-L-methionine is bound by residues Thr117, Gly138, Asp160, and Asn201.

It belongs to the methyltransferase superfamily. PrmA family.

The protein resides in the cytoplasm. The enzyme catalyses L-lysyl-[protein] + 3 S-adenosyl-L-methionine = N(6),N(6),N(6)-trimethyl-L-lysyl-[protein] + 3 S-adenosyl-L-homocysteine + 3 H(+). Methylates ribosomal protein L11. The protein is Ribosomal protein L11 methyltransferase of Thermosipho melanesiensis (strain DSM 12029 / CIP 104789 / BI429).